The primary structure comprises 3341 residues: Genome polyprotein (3341 aa).

Composition is skewed to basic and acidic residues over residues 1–14 (MKRK…KAPG) and 24–35 (REGRRKDKDKGG). The disordered stretch occupies residues 1–57 (MKRKDLEARGKAPGRDSSTPFWGREGRRKDKDKGGESPSNRQVTLKTPIQSGRRAGK). The Cytoplasmic portion of the chain corresponds to 1 to 120 (MKRKDLEARG…LESRRTTGNP (120 aa)). A compositionally biased stretch (polar residues) spans 37–50 (SPSNRQVTLKTPIQ). Residues 55 to 97 (AGKRQRVGLLGRLGVGWGSFLQEDIVQALIHMALVLHALFASI) are hydrophobic; homodimerization of capsid protein C. Residues 117–136 (TGNPMTLAFILGFLTVLCGC) constitute a propeptide, ER anchor for the capsid protein C, removed in mature form by serine protease NS3. A helical membrane pass occupies residues 121-141 (MTLAFILGFLTVLCGCVVIDM). Residues 142–245 (QVSTTRGTEI…AFKTIRENKT (104 aa)) lie on the Extracellular side of the membrane. N-linked (GlcNAc...) asparagine; by host glycans are attached at residues asparagine 157 and asparagine 243. The chain crosses the membrane as a helical span at residues 246-262 (IFIVALLCVAIAKRWPT). Position 263 (tryptophan 263) is a topological domain, cytoplasmic. Residues 264–278 (VVILLAIGTWTTVKG) form a helical membrane-spanning segment. The Extracellular segment spans residues 279-665 (EFVEPLYTLK…GVWQDLVGKF (387 aa)). N-linked (GlcNAc...) asparagine; by host glycosylation occurs at asparagine 339. The involved in fusion stretch occupies residues 371 to 384 (NRGWGTGCFKWGIG). 4 N-linked (GlcNAc...) asparagine; by host glycosylation sites follow: asparagine 399, asparagine 411, asparagine 575, and asparagine 611. Residues 666–686 (SVGAFFSNTALLVILVLAALI) traverse the membrane as a helical segment. The Cytoplasmic portion of the chain corresponds to 687–689 (DKR). Residues 690–705 (IAFLLVLGGYFYYVRA) form a helical membrane-spanning segment. The Extracellular portion of the chain corresponds to 706–1138 (DLGCGIDTTR…AKTRTSTLTR (433 aa)). N-linked (GlcNAc...) asparagine; by host glycosylation is found at asparagine 794, asparagine 896, asparagine 993, and asparagine 1027. The chain crosses the membrane as a helical span at residues 1139 to 1159 (LFLTILAMALFGLPNLFSSVG). The Cytoplasmic portion of the chain corresponds to 1160 to 1178 (LSAWVLLVASSSAQPQDLS). Residues 1179–1199 (MNLWIVLQTGSSAVLLLGYMI) traverse the membrane as a helical segment. At 1200–1204 (RRKLA) the chain is on the lumenal side. Residues 1205–1225 (MVLGVHHLVTLMCVQFLFSAV) form a helical membrane-spanning segment. Residues 1226-1231 (DRYQKY) are Cytoplasmic-facing. A helical membrane pass occupies residues 1232–1252 (LYGLLELMASVVLLSAYKSVL). Residues 1253–1261 (QALPPEVLC) are Lumenal-facing. Residues 1262–1282 (FSLVMGWKTALSLATVVFLIF) traverse the membrane as a helical segment. The Cytoplasmic segment spans residues 1283 to 1303 (SLNAMYKYACQYHNPRNGYRD). Residues 1304–1324 (SGANLWFWTVSLASAGGIWAA) form a helical membrane-spanning segment. Residues 1325–1326 (EK) lie on the Lumenal side of the membrane. A helical transmembrane segment spans residues 1327–1347 (AHQPTVAAVLAFTMVVLFLYM). The Cytoplasmic segment spans residues 1348–1403 (EQTNVSMELEFISAGETPEGVSTENDDGINIPDLKGRYGEDGIVVGAASSSGYLPE). An intramembrane region (helical) is located at residues 1404–1424 (LVFVFLLGFAVTSTSYFLGAL). Topologically, residues 1425–2089 (YLLIATSTNL…TERSLTVVMA (665 aa)) are cytoplasmic. One can recognise a Peptidase S7 domain in the interval 1452–1630 (SDDLLGLGGP…KPTDVTESLN (179 aa)). Residues histidine 1506, aspartate 1530, and serine 1589 each act as charge relay system; for serine protease NS3 activity in the active site. Residues 1627–1780 (ESLNCDSTRR…SNYAISDQSI (154 aa)) enclose the Helicase ATP-binding domain. ATP is bound at residue 1640 to 1647 (WHPGKGKT). The short motif at 1729–1732 (DECH) is the DECH box element. In terms of domain architecture, Helicase C-terminal spans 1793 to 1947 (NVQKSVGAKK…TFMLEEAAYS (155 aa)). The helical transmembrane segment at 2090–2110 (FVLGVSIMLSCFIAVWALCFL) threads the bilayer. The Lumenal portion of the chain corresponds to 2111–2145 (FSLFRPKKATYEQMPSSDPLSGGVLVSTPSVLYCM). Residues 2146–2166 (GVPLGFCVVITLAMFLVYPVL) traverse the membrane as a helical segment. Topologically, residues 2167–2178 (YKSIGNRSYMDS) are cytoplasmic. The helical transmembrane segment at 2179 to 2199 (DLVKWVILGSCLICGVLAWEM) threads the bilayer. Residues 2200–2242 (RMFPNIRSDLMELVKAVKEPEEVVNSGPSFPSWEIAQGKGATM) lie on the Lumenal side of the membrane. The chain crosses the membrane as a helical span at residues 2243–2263 (LDSLQVFFFITVLSTKFLYWF). The Cytoplasmic portion of the chain corresponds to 2264 to 2302 (QENWTARMYAMKHPEMVSSIGGFRFDEIPFRAVLPSGFA). The segment at residues 2303–2323 (IVAIASLPSVVVGLLAAGVFM) is an intramembrane region (helical). The Cytoplasmic portion of the chain corresponds to 2324–2366 (AIMYCQNKWNATPKILTALDARDQRHDRPTEITSRVPLENTRS). The helical transmembrane segment at 2367-2387 (IMYAFCLIFSLFWAFCTRSPG) threads the bilayer. Over 2388–2412 (DFLRGSLVVGASMWQILHPRSKIHD) the chain is Lumenal. The helical transmembrane segment at 2413–2433 (VMDFGSMVSAIGLLEMNYLFY) threads the bilayer. At 2434 to 3341 (RFMHIAARAL…SRYRRGNDVI (908 aa)) the chain is on the cytoplasmic side. The 253-residue stretch at 2454–2706 (ALEKSTTIGL…SPVLPKGTRA (253 aa)) folds into the mRNA cap 0-1 NS5-type MT domain. Residue serine 2497 coordinates S-adenosyl-L-methionine. The active-site For 2'-O-MTase activity is the lysine 2509. 6 residues coordinate S-adenosyl-L-methionine: glycine 2527, tryptophan 2528, threonine 2545, isoleucine 2546, aspartate 2572, and valine 2573. Catalysis depends on aspartate 2587, which acts as the For 2'-O-MTase activity. Isoleucine 2588 is a binding site for S-adenosyl-L-methionine. Active-site for 2'-O-MTase activity residues include lysine 2624 and glutamate 2660. An S-adenosyl-L-methionine-binding site is contributed by tyrosine 2662. Zn(2+)-binding residues include glutamate 2881, histidine 2885, cysteine 2890, and cysteine 2893. A RdRp catalytic domain is found at 2970 to 3117 (KYLIADDIAG…STDNRDFSSA (148 aa)). Residues histidine 3152, cysteine 3168, and cysteine 3287 each contribute to the Zn(2+) site.

The protein in the N-terminal section; belongs to the class I-like SAM-binding methyltransferase superfamily. mRNA cap 0-1 NS5-type methyltransferase family. In terms of assembly, homodimer. Forms heterodimers with envelope protein E in the endoplasmic reticulum and Golgi. As to quaternary structure, homodimer; in the endoplasmic reticulum and Golgi. In terms of assembly, forms homodimers as well as homohexamers. NS1 may interact with NS4A. Forms a heterodimer with serine protease NS3. May form homooligomers. As to quaternary structure, forms a heterodimer with NS2B. Interacts with NS4B. Interacts with unphosphorylated RNA-directed RNA polymerase NS5; this interaction stimulates RNA-directed RNA polymerase NS5 guanylyltransferase activity. In terms of assembly, interacts with serine protease NS3. Interacts with host STAT2; this interaction inhibits the phosphorylation of the latter, and, when all viral proteins are present (polyprotein), targets STAT2 for degradation. In terms of processing, genome polyprotein: Specific enzymatic cleavages in vivo yield mature proteins. Cleavages in the lumen of endoplasmic reticulum are performed by host signal peptidase, whereas cleavages in the cytoplasmic side are performed by serine protease NS3. Signal cleavage at the 2K-4B site requires a prior NS3 protease-mediated cleavage at the 4A-2K site. Post-translationally, cleaved in post-Golgi vesicles by a host furin, releasing the mature small envelope protein M, and peptide pr. This cleavage is incomplete as up to 30% of viral particles still carry uncleaved prM. N-glycosylated. In terms of processing, N-glycosylated. The excreted form is glycosylated and this is required for efficient secretion of the protein from infected cells. Post-translationally, phosphorylated on serines residues. This phosphorylation may trigger NS5 nuclear localization.

The protein resides in the virion. It localises to the host nucleus. It is found in the secreted. Its subcellular location is the virion membrane. The protein localises to the host endoplasmic reticulum membrane. The enzyme catalyses Selective hydrolysis of -Xaa-Xaa-|-Yaa- bonds in which each of the Xaa can be either Arg or Lys and Yaa can be either Ser or Ala.. The catalysed reaction is RNA(n) + a ribonucleoside 5'-triphosphate = RNA(n+1) + diphosphate. It carries out the reaction a ribonucleoside 5'-triphosphate + H2O = a ribonucleoside 5'-diphosphate + phosphate + H(+). It catalyses the reaction ATP + H2O = ADP + phosphate + H(+). The enzyme catalyses a 5'-end (5'-triphosphoguanosine)-ribonucleoside in mRNA + S-adenosyl-L-methionine = a 5'-end (N(7)-methyl 5'-triphosphoguanosine)-ribonucleoside in mRNA + S-adenosyl-L-homocysteine. The catalysed reaction is a 5'-end (N(7)-methyl 5'-triphosphoguanosine)-ribonucleoside in mRNA + S-adenosyl-L-methionine = a 5'-end (N(7)-methyl 5'-triphosphoguanosine)-(2'-O-methyl-ribonucleoside) in mRNA + S-adenosyl-L-homocysteine + H(+). Plays a role in virus budding by binding to the cell membrane and gathering the viral RNA into a nucleocapsid that forms the core of a mature virus particle. During virus entry, may induce genome penetration into the host cytoplasm after hemifusion induced by the surface proteins. Can migrate to the cell nucleus where it modulates host functions. In terms of biological role, prevents premature fusion activity of envelope proteins in trans-Golgi by binding to envelope protein E at pH6.0. After virion release in extracellular space, gets dissociated from E dimers. Its function is as follows. Acts as a chaperone for envelope protein E during intracellular virion assembly by masking and inactivating envelope protein E fusion peptide. prM is the only viral peptide matured by host furin in the trans-Golgi network probably to avoid catastrophic activation of the viral fusion activity in acidic Golgi compartment prior to virion release. prM-E cleavage is inefficient, and many virions are only partially matured. These uncleaved prM would play a role in immune evasion. Functionally, may play a role in virus budding. Exerts cytotoxic effects by activating a mitochondrial apoptotic pathway through M ectodomain. May display a viroporin activity. Binds to host cell surface receptor and mediates fusion between viral and cellular membranes. Envelope protein is synthesized in the endoplasmic reticulum in the form of heterodimer with protein prM. They play a role in virion budding in the ER, and the newly formed immature particle is covered with 60 spikes composed of heterodimer between precursor prM and envelope protein E. The virion is transported to the Golgi apparatus where the low pH causes dissociation of PrM-E heterodimers and formation of E homodimers. prM-E cleavage is inefficient, and many virions are only partially matured. These uncleaved prM would play a role in immune evasion. In terms of biological role, involved in immune evasion, pathogenesis and viral replication. Once cleaved off the polyprotein, is targeted to three destinations: the viral replication cycle, the plasma membrane and the extracellular compartment. May play a role in viral genome replication. Assist membrane bending and envelopment of genomic RNA at the endoplasmic reticulum. Excreted as a hexameric lipoparticle that plays a role against host immune response. Its function is as follows. Component of the viral RNA replication complex that functions in virion assembly and antagonizes the host immune response. Functionally, required cofactor for the serine protease function of NS3. May have membrane-destabilizing activity and form viroporins. Displays three enzymatic activities: serine protease, NTPase and RNA helicase. NS3 serine protease, in association with NS2B, performs its autocleavage and cleaves the polyprotein at dibasic sites in the cytoplasm: C-prM, NS2A-NS2B, NS2B-NS3, NS3-NS4A, NS4A-2K and NS4B-NS5. NS3 RNA helicase binds RNA and unwinds dsRNA in the 3' to 5' direction. In terms of biological role, regulates the ATPase activity of the NS3 helicase activity. NS4A allows NS3 helicase to conserve energy during unwinding. Its function is as follows. Functions as a signal peptide for NS4B and is required for the interferon antagonism activity of the latter. Functionally, inhibits interferon (IFN)-induced host STAT1 phosphorylation and nuclear translocation, thereby preventing the establishment of a cellular antiviral state by blocking the IFN-alpha/beta pathway. Replicates the viral (+) and (-) RNA genome, and performs the capping of genomes in the cytoplasm. NS5 methylates viral RNA cap at guanine N-7 and ribose 2'-O positions. Besides its role in RNA genome replication, also prevents the establishment of cellular antiviral state by blocking the interferon-alpha/beta (IFN-alpha/beta) signaling pathway. Inhibits host TYK2 and STAT2 phosphorylation, thereby preventing activation of JAK-STAT signaling pathway. The chain is Genome polyprotein from Aedes (CFA flavivirus).